The following is a 175-amino-acid chain: Large ribosomal subunit protein uL10 (175 aa).

It belongs to the universal ribosomal protein uL10 family. Part of the ribosomal stalk of the 50S ribosomal subunit. The N-terminus interacts with L11 and the large rRNA to form the base of the stalk. The C-terminus forms an elongated spine to which L12 dimers bind in a sequential fashion forming a multimeric L10(L12)X complex.

In terms of biological role, forms part of the ribosomal stalk, playing a central role in the interaction of the ribosome with GTP-bound translation factors. The chain is Large ribosomal subunit protein uL10 from Synechococcus sp. (strain CC9605).